The primary structure comprises 198 residues: MAIKPTKSFQNCLEAEVPGYNDCPTVLFSIDPNSGPRSKSKQRTKSKRCVSGRLATEVLDLYGNTKTATTPPPVLRRPSVTAAQQESACEGVLVKDQGDRQLQPILCSKEELVAKINDLCVCGSKLSSKELEFYKKKLDSNITKILQNEHTKTVLSQIFNEKDKNMAVKTIKHWMVTDTTISNWCPAFLKIFENAMPN.

A Phosphoserine modification is found at Ser79.

The protein resides in the cytoplasm. Involved in ER-associated protein degradation (ERAD). This Saccharomyces cerevisiae (strain ATCC 204508 / S288c) (Baker's yeast) protein is Alpha1-proteinase inhibitor-degradation deficient protein 37 (ADD37).